The sequence spans 458 residues: tRNA modification GTPase MnmE (458 aa).

(6S)-5-formyl-5,6,7,8-tetrahydrofolate is bound by residues R26, E88, and R127. The TrmE-type G domain occupies 224–378 (GLSTAIIGRP…IEDRINQLFF (155 aa)). A K(+)-binding site is contributed by N234. Residues 234–239 (NVGKSS), 253–259 (TDIAGTT), and 278–281 (DTAG) each bind GTP. S238 is a Mg(2+) binding site. K(+) is bound by residues T253, I255, and T258. T259 provides a ligand contact to Mg(2+). (6S)-5-formyl-5,6,7,8-tetrahydrofolate is bound at residue K458.

This sequence belongs to the TRAFAC class TrmE-Era-EngA-EngB-Septin-like GTPase superfamily. TrmE GTPase family. As to quaternary structure, homodimer. Heterotetramer of two MnmE and two MnmG subunits. K(+) serves as cofactor.

The protein resides in the cytoplasm. Functionally, exhibits a very high intrinsic GTPase hydrolysis rate. Involved in the addition of a carboxymethylaminomethyl (cmnm) group at the wobble position (U34) of certain tRNAs, forming tRNA-cmnm(5)s(2)U34. The sequence is that of tRNA modification GTPase MnmE from Streptococcus pyogenes serotype M12 (strain MGAS9429).